The chain runs to 697 residues: Glycine--tRNA ligase beta subunit (697 aa).

It belongs to the class-II aminoacyl-tRNA synthetase family. Tetramer of two alpha and two beta subunits.

It localises to the cytoplasm. It carries out the reaction tRNA(Gly) + glycine + ATP = glycyl-tRNA(Gly) + AMP + diphosphate. The sequence is that of Glycine--tRNA ligase beta subunit from Cereibacter sphaeroides (strain ATCC 17023 / DSM 158 / JCM 6121 / CCUG 31486 / LMG 2827 / NBRC 12203 / NCIMB 8253 / ATH 2.4.1.) (Rhodobacter sphaeroides).